A 146-amino-acid chain; its full sequence is Cytochrome c-type biogenesis protein CcmE (146 aa).

Residues 1 to 8 lie on the Cytoplasmic side of the membrane; that stretch reads MNPRRKKR. Residues 9 to 29 traverse the membrane as a helical; Signal-anchor for type II membrane protein segment; that stretch reads LGLILALVLGASATVGLMLYA. The Periplasmic portion of the chain corresponds to 30 to 146; sequence LNQNMDLFYT…EVAEAMKKTH (117 aa). Residues histidine 129 and tyrosine 133 each contribute to the heme site.

It belongs to the CcmE/CycJ family.

It localises to the cell inner membrane. Functionally, heme chaperone required for the biogenesis of c-type cytochromes. Transiently binds heme delivered by CcmC and transfers the heme to apo-cytochromes in a process facilitated by CcmF and CcmH. The protein is Cytochrome c-type biogenesis protein CcmE of Aliivibrio salmonicida (strain LFI1238) (Vibrio salmonicida (strain LFI1238)).